The sequence spans 158 residues: NAD(P)H-quinone oxidoreductase subunit N (158 aa).

It belongs to the complex I NdhN subunit family. In terms of assembly, NDH-1 can be composed of about 15 different subunits; different subcomplexes with different compositions have been identified which probably have different functions.

The protein localises to the cellular thylakoid membrane. It catalyses the reaction a plastoquinone + NADH + (n+1) H(+)(in) = a plastoquinol + NAD(+) + n H(+)(out). The enzyme catalyses a plastoquinone + NADPH + (n+1) H(+)(in) = a plastoquinol + NADP(+) + n H(+)(out). Functionally, NDH-1 shuttles electrons from an unknown electron donor, via FMN and iron-sulfur (Fe-S) centers, to quinones in the respiratory and/or the photosynthetic chain. The immediate electron acceptor for the enzyme in this species is believed to be plastoquinone. Couples the redox reaction to proton translocation, and thus conserves the redox energy in a proton gradient. Cyanobacterial NDH-1 also plays a role in inorganic carbon-concentration. This Prochlorococcus marinus (strain AS9601) protein is NAD(P)H-quinone oxidoreductase subunit N.